A 113-amino-acid polypeptide reads, in one-letter code: Non-specific lipid-transfer protein (113 aa).

The signal sequence occupies residues 1-24 (AQVMLMAVALVLMLAAVPRAAVAI). 4 disulfides stabilise this stretch: Cys26-Cys73, Cys36-Cys50, Cys51-Cys96, and Cys71-Cys110. Asp30 is lipidated: Cis-14-hydroxy-10,13-dioxo-7-heptadecenoic acid aspartate ester.

This sequence belongs to the plant LTP family.

Functionally, plant non-specific lipid-transfer proteins transfer phospholipids as well as galactolipids across membranes. May play a role in wax or cutin deposition in the cell walls of expanding epidermal cells and certain secretory tissues. The sequence is that of Non-specific lipid-transfer protein from Triticum aestivum (Wheat).